A 348-amino-acid polypeptide reads, in one-letter code: GTP 3',8-cyclase (348 aa).

Residues 24–242 (PFGRAVTYLR…EKQFTLTDID (219 aa)) form the Radical SAM core domain. Arg-33 is a GTP binding site. Cys-40 and Cys-44 together coordinate [4Fe-4S] cluster. An S-adenosyl-L-methionine-binding site is contributed by Tyr-46. Cys-47 lines the [4Fe-4S] cluster pocket. Residue Arg-82 participates in GTP binding. Residue Gly-86 participates in S-adenosyl-L-methionine binding. Thr-115 is a binding site for GTP. Ser-139 is a binding site for S-adenosyl-L-methionine. Lys-175 contacts GTP. Residue Met-209 participates in S-adenosyl-L-methionine binding. Positions 272 and 275 each coordinate [4Fe-4S] cluster. 277–279 (RVR) is a binding site for GTP. Residue Cys-289 coordinates [4Fe-4S] cluster.

This sequence belongs to the radical SAM superfamily. MoaA family. As to quaternary structure, monomer and homodimer. [4Fe-4S] cluster is required as a cofactor.

The catalysed reaction is GTP + AH2 + S-adenosyl-L-methionine = (8S)-3',8-cyclo-7,8-dihydroguanosine 5'-triphosphate + 5'-deoxyadenosine + L-methionine + A + H(+). It participates in cofactor biosynthesis; molybdopterin biosynthesis. Functionally, catalyzes the cyclization of GTP to (8S)-3',8-cyclo-7,8-dihydroguanosine 5'-triphosphate. This is GTP 3',8-cyclase from Rhizobium etli (strain CIAT 652).